The sequence spans 474 residues: tRNA-2-methylthio-N(6)-dimethylallyladenosine synthase (474 aa).

In terms of domain architecture, MTTase N-terminal spans 3–120 (KKLHIKTWGC…LPEMINSVRG (118 aa)). Positions 12, 49, 83, 157, 161, and 164 each coordinate [4Fe-4S] cluster. The region spanning 143–375 (RAEGPTAFVS…QERINQQAMA (233 aa)) is the Radical SAM core domain. In terms of domain architecture, TRAM spans 378-441 (RRMLGTTQRI…PNSLRGKVVR (64 aa)).

It belongs to the methylthiotransferase family. MiaB subfamily. Monomer. [4Fe-4S] cluster serves as cofactor.

The protein localises to the cytoplasm. The enzyme catalyses N(6)-dimethylallyladenosine(37) in tRNA + (sulfur carrier)-SH + AH2 + 2 S-adenosyl-L-methionine = 2-methylsulfanyl-N(6)-dimethylallyladenosine(37) in tRNA + (sulfur carrier)-H + 5'-deoxyadenosine + L-methionine + A + S-adenosyl-L-homocysteine + 2 H(+). In terms of biological role, catalyzes the methylthiolation of N6-(dimethylallyl)adenosine (i(6)A), leading to the formation of 2-methylthio-N6-(dimethylallyl)adenosine (ms(2)i(6)A) at position 37 in tRNAs that read codons beginning with uridine. The polypeptide is tRNA-2-methylthio-N(6)-dimethylallyladenosine synthase (Shigella boydii serotype 18 (strain CDC 3083-94 / BS512)).